Consider the following 477-residue polypeptide: MLTVSVKWQKKVFESIEIDTSQPPFVFKAQLYDLSGVPPERQKIMVKGGLLKDDADWSTLGLKNGQKLMMMGTADEIVKAPEKGPVFMEDLPEEQQAANLGYSAGLVNLGNTCYMNSTMQCLISVPELKSELSNYQSARTKDVDQTSHMLTVATRELFSELDKSVKAVAPMPFWMVLQKKYPQFAQLHNGNHMQQDAEECWTQMLYTLSQSLKLPSPSEDPDAVKALFGLNLLNRLHCQESSEESSETESVFSLKCHISHEVNHLHEGLKHGLKGELEKTSPSLGRTAVYVKESLIDSLPRYLTVQFVRFFWKRESNQKAKILRKVDYPLELDIYDLCSEDLRKKLEAPRQKLRDIEGQKLGLQASAKSSSKGDDVKMTDAEGSSNQSGESSTGDQQEGASPHMTGIYDLVSVLTHKGRSADSGHYVAWVKQESGKWVQYDDANTSLQRGEDIIKLSGGGDWHMAYIVMYKARLISM.

In terms of domain architecture, Ubiquitin-like spans 2–77 (LTVSVKWQKK…LMMMGTADEI (76 aa)). Residues 104 to 473 (AGLVNLGNTC…MAYIVMYKAR (370 aa)) form the USP domain. The Nucleophile role is filled by C113. The interval 171–190 (MPFWMVLQKKYPQFAQLHNG) is calmodulin-binding. The tract at residues 364–401 (QASAKSSSKGDDVKMTDAEGSSNQSGESSTGDQQEGAS) is disordered. Over residues 371-380 (SKGDDVKMTD) the composition is skewed to basic and acidic residues. A compositionally biased stretch (polar residues) spans 382 to 399 (EGSSNQSGESSTGDQQEG). Residue H425 is the Proton acceptor of the active site.

This sequence belongs to the peptidase C19 family. Interacts with calmodulin (CaM).

It catalyses the reaction Thiol-dependent hydrolysis of ester, thioester, amide, peptide and isopeptide bonds formed by the C-terminal Gly of ubiquitin (a 76-residue protein attached to proteins as an intracellular targeting signal).. In terms of biological role, recognizes and hydrolyzes the peptide bond at the C-terminal Gly of ubiquitin. Involved in the processing of poly-ubiquitin precursors as well as that of ubiquitinated proteins. This is Ubiquitin carboxyl-terminal hydrolase 7 (UBP7) from Arabidopsis thaliana (Mouse-ear cress).